We begin with the raw amino-acid sequence, 312 residues long: Fibrinogen-like protein 1 (312 aa).

The first 22 residues, 1 to 22, serve as a signal peptide directing secretion; sequence MAKMFSFILVTTALVMGRGSSA. A coiled-coil region spans residues 39 to 60; sequence LLETRVKQQQVKISQLLHEKQV. One can recognise a Fibrinogen C-terminal domain in the interval 74-306; sequence LGGKRQYADC…SVVMKIRPND (233 aa). 2 disulfides stabilise this stretch: C83–C112 and C248–C261.

Homodimer. Interacts (via the Fibrinogen C-terminal domain) with LAG3 (via Ig-like domains 1 and 2).

The protein resides in the secreted. Its function is as follows. Immune suppressive molecule that inhibits antigen-specific T-cell activation by acting as a major ligand of LAG3. Responsible for LAG3 T-cell inhibitory function. Binds LAG3 independently from MHC class II (MHC-II). Secreted by, and promotes growth of, hepatocytes. The sequence is that of Fibrinogen-like protein 1 (FGL1) from Bos taurus (Bovine).